We begin with the raw amino-acid sequence, 141 residues long: Lysozyme 1 (141 aa).

Positions 1 to 19 (MKFFIVLVAALALAAPAMG) are cleaved as a signal peptide. The C-type lysozyme domain occupies 20–141 (KTFTRCSLAR…GSLPSINDCF (122 aa)). 4 disulfides stabilise this stretch: C25–C140, C46–C130, C81–C97, and C93–C111. Residue E51 is part of the active site. N-linked (GlcNAc...) asparagine glycosylation occurs at N65. D69 is a catalytic residue. Residue N104 is glycosylated (N-linked (GlcNAc...) asparagine).

Belongs to the glycosyl hydrolase 22 family.

The catalysed reaction is Hydrolysis of (1-&gt;4)-beta-linkages between N-acetylmuramic acid and N-acetyl-D-glucosamine residues in a peptidoglycan and between N-acetyl-D-glucosamine residues in chitodextrins.. Functionally, may not function as a self-defense protein, but as a digestive enzyme, probably in the gut of the insect body. Inactive towards Micrococcus luteus. Active toward glycol chitin. The chain is Lysozyme 1 from Musca domestica (House fly).